The chain runs to 444 residues: Methylenetetrahydrofolate--tRNA-(uracil-5-)-methyltransferase TrmFO (444 aa).

10–15 (GAGLAG) contributes to the FAD binding site.

This sequence belongs to the MnmG family. TrmFO subfamily. FAD serves as cofactor.

The protein resides in the cytoplasm. The enzyme catalyses uridine(54) in tRNA + (6R)-5,10-methylene-5,6,7,8-tetrahydrofolate + NADH + H(+) = 5-methyluridine(54) in tRNA + (6S)-5,6,7,8-tetrahydrofolate + NAD(+). It carries out the reaction uridine(54) in tRNA + (6R)-5,10-methylene-5,6,7,8-tetrahydrofolate + NADPH + H(+) = 5-methyluridine(54) in tRNA + (6S)-5,6,7,8-tetrahydrofolate + NADP(+). In terms of biological role, catalyzes the folate-dependent formation of 5-methyl-uridine at position 54 (M-5-U54) in all tRNAs. The chain is Methylenetetrahydrofolate--tRNA-(uracil-5-)-methyltransferase TrmFO from Streptococcus equi subsp. zooepidemicus (strain H70).